A 585-amino-acid chain; its full sequence is MTDLIQAPESEQTWPASALGPQQRAAAWERFGTEQFDVVVIGGGVVGSGCALDAATRGLKVALVEARDLASGTSSRSSKMFHGGLRYLEQLEFGLVREALYERELSLTTLAPHLVKPLPFLFPLTKRWWERPYIAAGIFLYDRLGGAKSVPAQKHLTRAGALRLSPGLKRSSLIGGIRYYDTVVDDARHTLTVARTAAHYGAVVRCSTQVVALLREGDRVIGVRVRDSEDGAVTEIRGHVVVNATGVWTDEIQALSKQRGRFQVRVSKGVHVVVPRDRIVSDVAMILRTKKSVMFIIPWGNHWIIGTTDTDWNLDLAHPAATKADIDYILQTVNTVLATPLTHADIDGVYAGLRPLLAGESDDTSKLTREHAVAVPVAGLVAIAGGKYTTYRVMAADAIDAAVAFVPARVAPSITEKVGLLGADGYFALINQVEHVAALQGLHPYRVRHLLDRYGALIGDVLALAAEAPDLLSPIQEAPGYLKVEARYAVTAEGALHLEDILARRMRVSIEYPHRGVACAREVADVVAPVLGWTAEDIDREVATYNARVEAEVLSQAQPDDVSADMLRASAPEARTKIIEPVSLT.

Position 37-65 (Asp-37–Glu-65) interacts with FAD.

Belongs to the FAD-dependent glycerol-3-phosphate dehydrogenase family. It depends on FAD as a cofactor.

The protein resides in the cytoplasm. The catalysed reaction is a quinone + sn-glycerol 3-phosphate = dihydroxyacetone phosphate + a quinol. The sequence is that of Glycerol-3-phosphate dehydrogenase (glpD) from Mycobacterium leprae (strain TN).